The following is a 246-amino-acid chain: UDP-N-acetyl-D-mannosaminuronic acid transferase (246 aa).

Belongs to the glycosyltransferase 26 family.

It catalyses the reaction UDP-N-acetyl-alpha-D-mannosaminouronate + N-acetyl-alpha-D-glucosaminyl-di-trans,octa-cis-undecaprenyl diphosphate = beta-D-ManNAcA-(1-&gt;4)-alpha-D-GlcNAc-di-trans,octa-cis-undecaprenyl diphosphate + UDP + H(+). It participates in bacterial outer membrane biogenesis; enterobacterial common antigen biosynthesis. Its function is as follows. Catalyzes the synthesis of Und-PP-GlcNAc-ManNAcA (Lipid II), the second lipid-linked intermediate involved in enterobacterial common antigen (ECA) synthesis. The sequence is that of UDP-N-acetyl-D-mannosaminuronic acid transferase from Salmonella choleraesuis (strain SC-B67).